Reading from the N-terminus, the 307-residue chain is Taste receptor type 2 member 10 (307 aa).

Topologically, residues 1-6 are extracellular; sequence MLRVVE. Residues 7–27 traverse the membrane as a helical segment; the sequence is GIFIFVVISEXVFGVLGNGFI. Topologically, residues 28 to 42 are cytoplasmic; it reads GLVNCIDCAKNKLST. Residues 43–63 form a helical membrane-spanning segment; the sequence is IGFILTGLAISRIFLIWIIIT. Topologically, residues 64 to 100 are extracellular; sequence DGFIQIFSPDIYASGNLIEYISYFWVIGNQSSMWFAT. An N-linked (GlcNAc...) asparagine glycan is attached at Asn92. The helical transmembrane segment at 101 to 121 threads the bilayer; that stretch reads SLSIFYFLKIANFSNYIFLWL. Residues 122–126 are Cytoplasmic-facing; the sequence is KSRTN. A helical transmembrane segment spans residues 127 to 147; that stretch reads MVLPFMIVFLLISSLLNFAHI. Topologically, residues 148–179 are extracellular; the sequence is AKILNDYKMKNDTVWDLNMYKSEYFIKQILLN. Asn158 carries N-linked (GlcNAc...) asparagine glycosylation. Residues 180-200 form a helical membrane-spanning segment; it reads LGVIFFFTLSLITCVFLIISL. Topologically, residues 201–227 are cytoplasmic; sequence WRHNRQMQSNVTGLRDSNTEAHVKAMK. The helical transmembrane segment at 228–248 threads the bilayer; it reads VLISFXILFILYFIGMAIEIS. At 249 to 257 the chain is on the extracellular side; that stretch reads CFTVRENKL. Residues 258-278 traverse the membrane as a helical segment; sequence LLMFGMTTTAIYPWGHSFILI. Residues 279-307 lie on the Cytoplasmic side of the membrane; it reads LGNSKLKQASLRVLQQLKCCEKRKNLRVT.

Belongs to the G-protein coupled receptor T2R family.

It localises to the membrane. Functionally, receptor that may play a role in the perception of bitterness and is gustducin-linked. May play a role in sensing the chemical composition of the gastrointestinal content. The activity of this receptor may stimulate alpha gustducin, mediate PLC-beta-2 activation and lead to the gating of TRPM5. In Gorilla gorilla gorilla (Western lowland gorilla), this protein is Taste receptor type 2 member 10 (TAS2R10).